A 173-amino-acid chain; its full sequence is Flagellar biosynthetic protein FliV (173 aa).

This sequence belongs to the FliB family.

Functionally, required for the secretion of flagellin and expression of motility. This chain is Flagellar biosynthetic protein FliV (fliV), found in Salmonella muenchen.